A 207-amino-acid chain; its full sequence is MAETENVREIRDENYQSLIPMDEYLAAGVHIGTQQKTEDMKKFIYRVRSDGLYVLDVQSTDERIRAAAKFLSRYDPANVLVVCARQYGQHPAEMFARAIGARHIVGRFIPGTLTNPVYMFFAEPDVVVVTDPIGDAQAVTEAISIGVPVVAMCDTNNMTSNIDLVIPTNNKGRKALALVYWLLAREVSRERNEQGFSYTVNDFESEI.

This sequence belongs to the universal ribosomal protein uS2 family.

The polypeptide is Small ribosomal subunit protein uS2 (Methanocella arvoryzae (strain DSM 22066 / NBRC 105507 / MRE50)).